A 162-amino-acid chain; its full sequence is Onchocystatin (162 aa).

Positions 1–32 are cleaved as a signal peptide; that stretch reads MLTIKDGTLLIHLLLFSVVALVQLQGAKSARA. The segment at 30–54 is disordered; it reads ARAKNPSKMESKTGENQDRPVLLGG. The segment covering 36–47 has biased composition (basic and acidic residues); the sequence is SKMESKTGENQD. The short motif at 97–101 is the Secondary area of contact element; that stretch reads QVVAG. A disulfide bridge links C115 with C128.

Belongs to the cystatin family. Expressed in the cuticle of L3 and L4 larvae, female adult, and in the eggshell of developing microfilariae.

In terms of biological role, cysteine protease inhibitor which inhibits members of the peptidase C1 family. In the human host, inhibits CTSL/cathepsin L and CTSS/cathepsin S and to a lesser extent CTSB/cathepsin B which may cause defects in antigen processing and thereby impair antigen-driven T cell proliferation. In Onchocerca volvulus, this protein is Onchocystatin.